Consider the following 505-residue polypeptide: Apolipoprotein N-acyltransferase (505 aa).

6 consecutive transmembrane segments (helical) span residues 23–43 (LLAL…AVLY), 58–78 (GWWF…VSMN), 85–105 (PLLA…FFAL), 125–145 (LCFA…LTGF), 162–182 (LAPL…AALL), and 192–212 (PSFL…GLAL). Residues 230 to 469 (IQGNVEQDLK…QAVLYGEVVP (240 aa)) form the CN hydrolase domain. The Proton acceptor role is filled by Glu269. The active site involves Lys329. Cys381 (nucleophile) is an active-site residue. The helical transmembrane segment at 482-502 (WPLAIVCALLLGWALLAGRIA) threads the bilayer.

The protein belongs to the CN hydrolase family. Apolipoprotein N-acyltransferase subfamily.

It is found in the cell inner membrane. It catalyses the reaction N-terminal S-1,2-diacyl-sn-glyceryl-L-cysteinyl-[lipoprotein] + a glycerophospholipid = N-acyl-S-1,2-diacyl-sn-glyceryl-L-cysteinyl-[lipoprotein] + a 2-acyl-sn-glycero-3-phospholipid + H(+). The protein operates within protein modification; lipoprotein biosynthesis (N-acyl transfer). Functionally, catalyzes the phospholipid dependent N-acylation of the N-terminal cysteine of apolipoprotein, the last step in lipoprotein maturation. This Pseudomonas putida (strain ATCC 47054 / DSM 6125 / CFBP 8728 / NCIMB 11950 / KT2440) protein is Apolipoprotein N-acyltransferase.